Reading from the N-terminus, the 230-residue chain is Ephrin-A3 (230 aa).

A signal peptide spans 1-22 (MAAAPLLLLLLLVPVPLLPLLA). The 132-residue stretch at 30 to 161 (GNRHAVYWNS…RMKVFVCCAS (132 aa)) folds into the Ephrin RBD domain. 4 N-linked (GlcNAc...) asparagine glycosylation sites follow: Asn-38, Asn-67, Asn-84, and Asn-92. 2 cysteine pairs are disulfide-bonded: Cys-63–Cys-102 and Cys-91–Cys-150. The GPI-anchor amidated glycine moiety is linked to residue Gly-206. Positions 207–230 (TSPKREHLPLAVGIAFFLMTLLAS) are cleaved as a propeptide — removed in mature form.

It belongs to the ephrin family. Interacts with EPHA8; activates EPHA8. Expressed in myogenic progenitor cells.

It localises to the cell membrane. Cell surface GPI-bound ligand for Eph receptors, a family of receptor tyrosine kinases which are crucial for migration, repulsion and adhesion during neuronal, vascular and epithelial development. Binds promiscuously Eph receptors residing on adjacent cells, leading to contact-dependent bidirectional signaling into neighboring cells. The signaling pathway downstream of the receptor is referred to as forward signaling while the signaling pathway downstream of the ephrin ligand is referred to as reverse signaling. This chain is Ephrin-A3 (Efna3), found in Mus musculus (Mouse).